Consider the following 450-residue polypeptide: Isoleucine 2-epimerase (450 aa).

Residues 115–116, Y142, and 250–253 each bind pyridoxal 5'-phosphate; these read GS and DEVN. The residue at position 280 (K280) is an N6-(pyridoxal phosphate)lysine. T309 is a pyridoxal 5'-phosphate binding site.

This sequence belongs to the class-III pyridoxal-phosphate-dependent aminotransferase family. In terms of assembly, homotetramer. It depends on pyridoxal 5'-phosphate as a cofactor.

It catalyses the reaction L-isoleucine = D-allo-isoleucine. Its function is as follows. Catalyzes the epimerization of L-isoleucine to D-allo-isoleucine and D-allo-isoleucine to L-isoleucine. Can also catalyze the racemization of many nonpolar amino acids, including leucine and valine. Does not have GABA aminotransferase activity. The chain is Isoleucine 2-epimerase from Lentilactobacillus buchneri (Lactobacillus buchneri).